A 318-amino-acid chain; its full sequence is Pantothenate kinase (318 aa).

96 to 103 is an ATP binding site; sequence GSVAVGKS.

This sequence belongs to the prokaryotic pantothenate kinase family.

It localises to the cytoplasm. The catalysed reaction is (R)-pantothenate + ATP = (R)-4'-phosphopantothenate + ADP + H(+). The protein operates within cofactor biosynthesis; coenzyme A biosynthesis; CoA from (R)-pantothenate: step 1/5. The chain is Pantothenate kinase from Nitrobacter hamburgensis (strain DSM 10229 / NCIMB 13809 / X14).